The chain runs to 89 residues: Small ribosomal subunit protein uS15 (89 aa).

Positions 1–23 are disordered; the sequence is MTLNTEAKQKIINKHQTHGTDTG.

The protein belongs to the universal ribosomal protein uS15 family. In terms of assembly, part of the 30S ribosomal subunit. Forms a bridge to the 50S subunit in the 70S ribosome, contacting the 23S rRNA.

Functionally, one of the primary rRNA binding proteins, it binds directly to 16S rRNA where it helps nucleate assembly of the platform of the 30S subunit by binding and bridging several RNA helices of the 16S rRNA. Its function is as follows. Forms an intersubunit bridge (bridge B4) with the 23S rRNA of the 50S subunit in the ribosome. The sequence is that of Small ribosomal subunit protein uS15 from Prochlorococcus marinus (strain SARG / CCMP1375 / SS120).